Reading from the N-terminus, the 349-residue chain is Macrophage-capping protein (349 aa).

N-acetylmethionine is present on methionine 1. Gelsolin-like repeat units lie at residues 28–107 (KLKP…DLFM), 147–222 (KNIR…AEMI), and 264–342 (LTKV…PIFK). The Nuclear localization signal signature appears at 138 to 147 (RKLYQVKGKK). The residue at position 338 (serine 338) is a Phosphoserine.

Belongs to the villin/gelsolin family. Interacts with NUP62. Interacts with NUTF2 and RAN; involved in CAPG nuclear import. Phosphorylated.

The protein resides in the nucleus. Its subcellular location is the cytoplasm. It localises to the melanosome. The protein localises to the cell projection. It is found in the lamellipodium. The protein resides in the ruffle. In terms of biological role, calcium-sensitive protein which reversibly blocks the barbed ends of actin filaments but does not sever preformed actin filaments. May play an important role in macrophage function. May play a role in regulating cytoplasmic and/or nuclear structures through potential interactions with actin. May bind DNA. Uncapping occurs either when Ca(2+) falls or when the concentration of polyphosphoinositide rises, both at low and high Ca(2+). This chain is Macrophage-capping protein (Capg), found in Rattus norvegicus (Rat).